We begin with the raw amino-acid sequence, 707 residues long: Solute carrier family 15 member 1 (707 aa).

Residues 1–21 traverse the membrane as a helical segment; that stretch reads MGMSKSLSCFGYPLSIFFIVV. The Extracellular portion of the chain corresponds to 22 to 53; that stretch reads NEFCERFSYYGMRALLILYFRNFIGWDDNLST. N-linked (GlcNAc...) asparagine glycosylation occurs at N50. A helical membrane pass occupies residues 54-74; it reads VIYHTFVALCYLTPILGALIA. Residues 75–82 lie on the Cytoplasmic side of the membrane; it reads DAWLGKFK. A helical transmembrane segment spans residues 83-103; the sequence is TIVWLSIVYTIGQAVTSLSSV. The Extracellular segment spans residues 104-118; that stretch reads NELTDNNHDGTPDSL. A helical transmembrane segment spans residues 119–139; the sequence is PVHVAVCMIGLLLIALGTGGI. Residues 140 to 161 are Cytoplasmic-facing; sequence KPCVSAFGGDQFEEGQEKQRNR. The chain crosses the membrane as a helical span at residues 162–182; that stretch reads FFSIFYLAINAGSLLSTIITP. At 183–198 the chain is on the extracellular side; the sequence is MVRVQQCGIHVKQACY. Residues 199-219 traverse the membrane as a helical segment; that stretch reads PLAFGIPAILMAVSLIVFIIG. The Cytoplasmic segment spans residues 220–276; the sequence is SGMYKKFKPQGNILSKVVKCICFAIKNRFRHRSKQFPKRAHWLDWAKEKYDERLIAQ. Residues 277–297 form a helical membrane-spanning segment; that stretch reads IKMVTRVLFLYIPLPMFWALF. Residues 298-327 lie on the Extracellular side of the membrane; it reads DQQGSRWTLQATTMSGRIGILEIQPDQMQT. A helical membrane pass occupies residues 328–348; sequence VNTILIIILVPIMDAVVYPLI. The Cytoplasmic segment spans residues 349–361; sequence AKCGLNFTSLKKM. A helical transmembrane segment spans residues 362–382; that stretch reads TIGMFLASMAFVAAAILQVEI. Residues 383 to 583 are Extracellular-facing; the sequence is DKTLPVFPKA…PPNTMNMAWQ (201 aa). The segment at 383–583 is extracellular domain (ECD); that stretch reads DKTLPVFPKA…PPNTMNMAWQ (201 aa). 3 N-linked (GlcNAc...) asparagine glycosylation sites follow: N439, N498, and N513. Residues 584–604 form a helical membrane-spanning segment; it reads IPQYFLITSGEVVFSITGLEF. Residues 605–618 are Cytoplasmic-facing; the sequence is SYSQAPSNMKSVLQ. Residues 619–639 traverse the membrane as a helical segment; the sequence is AGWLLTVAVGNIIVLIVAGAG. The Extracellular segment spans residues 640 to 644; it reads QINKQ. Residues 645 to 665 form a helical membrane-spanning segment; sequence WAEYILFAALLLVVCVIFAIM. The Cytoplasmic segment spans residues 666-707; sequence ARFYTYVNPAEIEAQFEEDEKKKNPEKNDLYPSLAPVSQTQM. A disordered region spans residues 682–707; the sequence is EEDEKKKNPEKNDLYPSLAPVSQTQM. Positions 684 to 694 are enriched in basic and acidic residues; it reads DEKKKNPEKND.

Belongs to the major facilitator superfamily. Proton-dependent oligopeptide transporter (POT/PTR) (TC 2.A.17) family. In terms of assembly, interacts (via extracellular domain region) with trypsin. As to expression, intestine, kidney, liver and low in brain.

It localises to the apical cell membrane. The enzyme catalyses a dipeptide(out) + H(+)(out) = a dipeptide(in) + H(+)(in). It carries out the reaction an L-amino acid tripeptide(out) + H(+)(out) = an L-amino acid tripeptide(in) + H(+)(in). It catalyses the reaction L-alanyl-L-lysine(out) + H(+)(out) = L-alanyl-L-lysine(in) + H(+)(in). The catalysed reaction is L-alanyl-L-proline(out) + H(+)(out) = L-alanyl-L-proline(in) + H(+)(in). The enzyme catalyses L-alanyl-L-valine(out) + H(+)(out) = L-alanyl-L-valine(in) + H(+)(in). It carries out the reaction carnosine(out) + H(+)(out) = carnosine(in) + H(+)(in). It catalyses the reaction glycyl-L-glutamine(out) + H(+)(out) = glycyl-L-glutamine(in) + H(+)(in). The catalysed reaction is glycyl-L-leucine(out) + H(+)(out) = glycyl-L-leucine(in) + H(+)(in). The enzyme catalyses glycyl-L-proline(out) + H(+)(out) = glycyl-L-proline(in) + H(+)(in). It carries out the reaction glycyl-sarcosine(out) + H(+)(out) = glycyl-sarcosine(in) + H(+)(in). It catalyses the reaction L-leucyl-L-leucine(out) + H(+)(out) = L-leucyl-L-leucine(in) + H(+)(in). The catalysed reaction is L-leucyl-L-proline(out) + H(+)(out) = L-leucyl-L-proline(in) + H(+)(in). The enzyme catalyses L-phenylalanyl-L-leucine(out) + H(+)(out) = L-phenylalanyl-L-leucine(in) + H(+)(in). It carries out the reaction L-phenylalanyl-L-phenylalanine(out) + H(+)(out) = L-phenylalanyl-L-phenylalanine(in) + H(+)(in). It catalyses the reaction L-lysyl-glycine(out) + H(+)(out) = L-lysyl-glycine(in) + H(+)(in). The catalysed reaction is L-tyrosylglycine(out) + H(+)(out) = L-tyrosylglycine(in) + H(+)(in). The enzyme catalyses L-alanyl-L-aspartate(out) + 2 H(+)(out) = L-alanyl-L-aspartate(in) + 2 H(+)(in). It carries out the reaction L-aspartyl-glycine(out) + 2 H(+)(out) = L-aspartyl-glycine(in) + 2 H(+)(in). It catalyses the reaction glycyl-L-aspartate(out) + 2 H(+)(out) = glycyl-L-aspartate(in) + 2 H(+)(in). The catalysed reaction is glycyl-L-glutamate(out) + 2 H(+)(out) = glycyl-L-glutamate(in) + 2 H(+)(in). The enzyme catalyses L-alanyl-L-leucyl-L-alanine(out) + H(+)(out) = L-alanyl-L-leucyl-L-alanine(in) + H(+)(in). It carries out the reaction L-alanyl-L-prolylglycine(out) + H(+)(out) = L-alanyl-L-prolylglycine(in) + H(+)(in). It catalyses the reaction glycylglycyl-L-isoleucine(out) + H(+)(out) = glycylglycyl-L-isoleucine(in) + H(+)(in). The catalysed reaction is glycylglycyl-L-proline(out) + H(+)(out) = glycylglycyl-L-proline(in) + H(+)(in). The enzyme catalyses L-methionyl-L-phenylalanyl-L-methionine(out) + H(+)(out) = L-methionyl-L-phenylalanyl-L-methionine(in) + H(+)(in). It carries out the reaction N-acetyl-D-muramoyl-L-alanyl-D-isoglutamine(out) + 2 H(+)(out) = N-acetyl-D-muramoyl-L-alanyl-D-isoglutamine(in) + 2 H(+)(in). It catalyses the reaction N(alpha)-formyl-L-methionyl-L-leucyl-L-phenylalanine(out) + 2 H(+)(out) = N(alpha)-formyl-L-methionyl-L-leucyl-L-phenylalanine(in) + 2 H(+)(in). Its function is as follows. Electrogenic proton-coupled amino-acid transporter that transports oligopeptides of 2 to 4 amino acids with a preference for dipeptides. Transports neutral and monovalently charged peptides with a proton to peptide stoichiometry of 1:1 or 2:1. Primarily responsible for the absorption of dietary di- and tripeptides from the small intestinal lumen. Mediates transepithelial transport of muramyl and N-formylated bacterial dipeptides contributing to recognition of pathogenic bacteria by the mucosal immune system. The protein is Solute carrier family 15 member 1 (SLC15A1) of Oryctolagus cuniculus (Rabbit).